The chain runs to 65 residues: Conotoxin Am6.4 (65 aa).

Residues 1 to 33 form a disordered region; sequence STGKRNAGKLTVTDDVEADRDTDPDDKDPSVHN. Residues 1 to 36 constitute a propeptide that is removed on maturation; sequence STGKRNAGKLTVTDDVEADRDTDPDDKDPSVHNSWR. The segment covering 14–26 has biased composition (acidic residues); that stretch reads DDVEADRDTDPDD. Disulfide bonds link cysteine 40–cysteine 50, cysteine 45–cysteine 59, and cysteine 49–cysteine 64.

Post-translationally, is not hydroxylated. As to expression, expressed by the venom duct.

It is found in the secreted. In terms of biological role, probable toxin that inhibits ion channels. The sequence is that of Conotoxin Am6.4 from Conus amadis (Amadis cone).